Consider the following 34-residue polypeptide: MSDIN-like toxin proprotein 5 (34 aa).

Residues 1–10 constitute a propeptide that is removed on maturation; the sequence is MSDINTARLP. Residues 11–20 constitute a cross-link (cyclopeptide (Tyr-Pro)); the sequence is YVVFMSFIPP. Residues 21–34 constitute a propeptide that is removed on maturation; sequence CVNDDIQVVLTRGE.

The protein belongs to the MSDIN fungal toxin family. Processed by the macrocyclase-peptidase enzyme POPB to yield a toxic cyclic decapeptide. POPB first removes 10 residues from the N-terminus. Conformational trapping of the remaining peptide forces the enzyme to release this intermediate rather than proceed to macrocyclization. The enzyme rebinds the remaining peptide in a different conformation and catalyzes macrocyclization of the N-terminal 10 residues.

Its function is as follows. Probable toxin that belongs to the MSDIN-like toxin family responsible for a large number of food poisoning cases and deaths. This chain is MSDIN-like toxin proprotein 5, found in Amanita bisporigera (Destroying angel).